A 115-amino-acid chain; its full sequence is UPF0122 protein lp_1634 (115 aa).

This sequence belongs to the UPF0122 family.

In terms of biological role, might take part in the signal recognition particle (SRP) pathway. This is inferred from the conservation of its genetic proximity to ftsY/ffh. May be a regulatory protein. In Lactiplantibacillus plantarum (strain ATCC BAA-793 / NCIMB 8826 / WCFS1) (Lactobacillus plantarum), this protein is UPF0122 protein lp_1634.